Reading from the N-terminus, the 107-residue chain is Protamine-2 (107 aa).

The disordered stretch occupies residues 1–94 (MVRYRMRSPS…RRGCRRSRRR (94 aa)). S8, S10, and S33 each carry phosphoserine. The span at 43–94 (THRGHHHHRHRRCSRKRLHRIHKRRRSCRRRRRHSCRHRRRHRRGCRRSRRR) shows a compositional bias: basic residues.

Belongs to the protamine P2 family. Interacts with TDRP. Proteolytic processing into mature chains is required for histone eviction during spermatogenesis. Transition proteins (TNP1 and TNP2) are required for processing. In terms of tissue distribution, expressed in spermatids (at protein level).

It is found in the nucleus. The protein localises to the chromosome. Functionally, protamines substitute for histones in the chromatin of sperm during the haploid phase of spermatogenesis. They compact sperm DNA into a highly condensed, stable and inactive complex. This Mus musculus (Mouse) protein is Protamine-2 (Prm2).